The chain runs to 221 residues: Phosphoribosylformylglycinamidine synthase subunit PurQ (221 aa).

One can recognise a Glutamine amidotransferase type-1 domain in the interval threonine 5–glutamine 221. Cysteine 89 functions as the Nucleophile in the catalytic mechanism. Catalysis depends on residues histidine 197 and glutamate 199.

In terms of assembly, part of the FGAM synthase complex composed of 1 PurL, 1 PurQ and 2 PurS subunits.

It localises to the cytoplasm. It carries out the reaction N(2)-formyl-N(1)-(5-phospho-beta-D-ribosyl)glycinamide + L-glutamine + ATP + H2O = 2-formamido-N(1)-(5-O-phospho-beta-D-ribosyl)acetamidine + L-glutamate + ADP + phosphate + H(+). The enzyme catalyses L-glutamine + H2O = L-glutamate + NH4(+). It participates in purine metabolism; IMP biosynthesis via de novo pathway; 5-amino-1-(5-phospho-D-ribosyl)imidazole from N(2)-formyl-N(1)-(5-phospho-D-ribosyl)glycinamide: step 1/2. Its function is as follows. Part of the phosphoribosylformylglycinamidine synthase complex involved in the purines biosynthetic pathway. Catalyzes the ATP-dependent conversion of formylglycinamide ribonucleotide (FGAR) and glutamine to yield formylglycinamidine ribonucleotide (FGAM) and glutamate. The FGAM synthase complex is composed of three subunits. PurQ produces an ammonia molecule by converting glutamine to glutamate. PurL transfers the ammonia molecule to FGAR to form FGAM in an ATP-dependent manner. PurS interacts with PurQ and PurL and is thought to assist in the transfer of the ammonia molecule from PurQ to PurL. This chain is Phosphoribosylformylglycinamidine synthase subunit PurQ, found in Prochlorococcus marinus subsp. pastoris (strain CCMP1986 / NIES-2087 / MED4).